The following is a 548-amino-acid chain: MSLLRSASLLLVVVTAALPPCTLGYSLHDGSRLDDVIAEFTAERRPRRLATPAQRRLMGLTEEQHKTVQFYLDKLRELGNRRHPESYNKDSPKNEAYKWRKQMRDDLKTELLNPEKYGRHFEGDIILFPEQAKQIYENALKTGQRRVKRKFIGSDLRRWDPTRPIIYSFDGSHTSREQRIIELALEHRHNITCLNFVRNDNANKGNRIVFTDVDGCASNVGRHPLGEEQLVSLAPECIRLGVIAHEVAHALGFWHEQSRPDRDQFVNVRWENIDKDSKGQFLKEDPDDVDNAGVPYDYGSIMHYRSKAFSRYDDLYTISTFVTDYQKTIGQRDQLSFNDIRLMNKIYCSNVCSRKLPCQRGGYTDPRRCDRCRCPDGFTGQFCEQVMPGYGAVCGGRIQVNSGWTRFSSPGYPREFKEGQECSWLLVAPPGQVVEMQFIGEFEMYCKVRHSLCMDYVEVRNSTDFANTGMRYCCYGTPSTSIRSATTDLVVLFRSFYRGGRGFEARARALPANGQWASWTPWTPCTASCGACGSRMRTRVCPHGACPC.

The first 24 residues, 1–24 (MSLLRSASLLLVVVTAALPPCTLG), serve as a signal peptide directing secretion. A propeptide spanning residues 25 to 150 (YSLHDGSRLD…KTGQRRVKRK (126 aa)) is cleaved from the precursor. The Peptidase M12A domain maps to 150–349 (KFIGSDLRRW…IRLMNKIYCS (200 aa)). An N-linked (GlcNAc...) asparagine glycan is attached at N190. Intrachain disulfides connect C193-C348, C216-C237, C352-C372, C374-C383, and C394-C422. H245 contacts Zn(2+). Residue E246 is part of the active site. Zn(2+)-binding residues include H249 and H255. The region spanning 344-384 (NKIYCSNVCSRKLPCQRGGYTDPRRCDRCRCPDGFTGQFCE) is the EGF-like domain. The 117-residue stretch at 394-510 (CGGRIQVNSG…RGFEARARAL (117 aa)) folds into the CUB domain. A glycan (N-linked (GlcNAc...) asparagine) is linked at N461. Residues 513-547 (NGQWASWTPWTPCTASCGACGSRMRTRVCPHGACP) enclose the TSP type-1 domain. 3 cysteine pairs are disulfide-bonded: C525–C546, C529–C546, and C541–C546.

Requires Zn(2+) as cofactor.

The protein resides in the secreted. Its function is as follows. Metalloprotease which cleaves the carboxyl terminus of procollagens to mature collagens. Probably involved in cuticular collagen maturation. The protein is Zinc metalloproteinase dpy-31 of Haemonchus contortus (Barber pole worm).